The chain runs to 154 residues: MATFSQKPAEVVKKWVLIDAEGLVVGRLASLVANRLRGKHKATFTPHVDDGDNVIIINADKVVLTGKKYTDKKYYWHTGHPGGIKERTARQILEGRFPERVLEKAIERMIPRGPLGRRQMKNLRVYAGPNHQHEAQQPEVLDVAALNRKNKGNA.

Belongs to the universal ribosomal protein uL13 family. Part of the 50S ribosomal subunit.

This protein is one of the early assembly proteins of the 50S ribosomal subunit, although it is not seen to bind rRNA by itself. It is important during the early stages of 50S assembly. The chain is Large ribosomal subunit protein uL13 from Brucella suis (strain ATCC 23445 / NCTC 10510).